We begin with the raw amino-acid sequence, 206 residues long: Small ribosomal subunit protein uS4 (206 aa).

The region spanning 96–156 (CRLDNVVYRM…EKAKNQLRIV (61 aa)) is the S4 RNA-binding domain.

This sequence belongs to the universal ribosomal protein uS4 family. In terms of assembly, part of the 30S ribosomal subunit. Contacts protein S5. The interaction surface between S4 and S5 is involved in control of translational fidelity.

One of the primary rRNA binding proteins, it binds directly to 16S rRNA where it nucleates assembly of the body of the 30S subunit. Functionally, with S5 and S12 plays an important role in translational accuracy. In Pseudomonas fluorescens (strain ATCC BAA-477 / NRRL B-23932 / Pf-5), this protein is Small ribosomal subunit protein uS4.